Here is a 203-residue protein sequence, read N- to C-terminus: Imidazoleglycerol-phosphate dehydratase (203 aa).

The protein belongs to the imidazoleglycerol-phosphate dehydratase family.

Its subcellular location is the cytoplasm. It carries out the reaction D-erythro-1-(imidazol-4-yl)glycerol 3-phosphate = 3-(imidazol-4-yl)-2-oxopropyl phosphate + H2O. Its pathway is amino-acid biosynthesis; L-histidine biosynthesis; L-histidine from 5-phospho-alpha-D-ribose 1-diphosphate: step 6/9. The protein is Imidazoleglycerol-phosphate dehydratase of Synechococcus sp. (strain RCC307).